The primary structure comprises 592 residues: Keratin, type II cytoskeletal 5 (592 aa).

Over residues 1 to 18 (MSRQSSVSFRSGGSRSFS) the composition is skewed to low complexity. Residues 1–20 (MSRQSSVSFRSGGSRSFSTA) are disordered. A head region spans residues 1–169 (MSRQSSVSFR…DPSIQRVRTE (169 aa)). A phosphoserine mark is found at Ser5, Ser8, Ser16, and Ser21. Thr24 carries the post-translational modification Phosphothreonine; by CDK1. Ser26, Ser36, Ser50, Ser64, Ser71, Ser75, and Ser82 each carry phosphoserine. At Thr153 the chain carries Phosphothreonine; by CDK1. At Thr168 the chain carries Phosphothreonine; by AURKB. The coil 1A stretch occupies residues 170–205 (EREQIKTLNNKFASFIDKVRFLEQQNKVLDTKWTLL). Residues 170 to 483 (EREQIKTLNN…KLLEGEECRL (314 aa)) enclose the IF rod domain. The segment at 206 to 224 (QEQGTKTVRQNLEPLFEQY) is linker 1. The segment at 225–317 (INNLRRQLDS…FFDAELSQMQ (93 aa)) is coil 1B. The interval 318–340 (THVSDTSVVLSMDNNRNLDLDSI) is linker 12. The segment at 341 to 479 (IAEVKAQYEE…ATYRKLLEGE (139 aa)) is coil 2. The tract at residues 480–592 (ECRLSGEGVG…TSSSRKSFKS (113 aa)) is tail. Residues 568-592 (GSGGGSSSSVKFVSTTSSSRKSFKS) form a disordered region. The segment covering 574-592 (SSSVKFVSTTSSSRKSFKS) has biased composition (low complexity).

It belongs to the intermediate filament family. In terms of assembly, heterodimer of a type I and a type II keratin. Heterodimer with type I keratin KRT25 leading to the formation of keratin intermediate filament (KIF) network. Forms a heterodimer (via 2B domains) with KRT14 (via 2B domains). Interacts with TCHP. Interacts with EPPK1. Interacts with AMELX. Interacts with PKP1 (via N-terminus) and PKP2. Post-translationally, phosphorylated by CDK1, AURKB and Rho-kinase, phosphorylation is regulated by the cell cycle. Thr-24 phosphorylation, mediated by CDK1, peaks during prometaphase or metaphase cells with phosphorylated filamentous structures evident throughout the cytoplasm during early mitosis. CDK1 phosphorylates Thr-24 in mitotic cells at the site of injury. O-glycosylated.

It is found in the cytoplasm. Its function is as follows. Required for the formation of keratin intermediate filaments in the basal epidermis and maintenance of the skin barrier in response to mechanical stress. Regulates the recruitment of Langerhans cells to the epidermis, potentially by modulation of the abundance of macrophage chemotactic cytokines, macrophage inflammatory cytokines and CTNND1 localization in keratinocytes. This is Keratin, type II cytoskeletal 5 (KRT5) from Pan troglodytes (Chimpanzee).